Consider the following 359-residue polypeptide: Probable D-xylulose reductase A (359 aa).

Zn(2+)-binding residues include Cys-47, His-72, and Glu-73. 182–187 (GAGPVG) lines the NAD(+) pocket.

It belongs to the zinc-containing alcohol dehydrogenase family. Zn(2+) is required as a cofactor.

It carries out the reaction xylitol + NAD(+) = D-xylulose + NADH + H(+). It participates in carbohydrate degradation; L-arabinose degradation via L-arabinitol; D-xylulose 5-phosphate from L-arabinose (fungal route): step 4/5. Its function is as follows. Xylitol dehydrogenase which catalyzes the conversion of xylitol to D-xylulose. Xylose is a major component of hemicelluloses such as xylan. Most fungi utilize D-xylose via three enzymatic reactions, xylose reductase (XR), xylitol dehydrogenase (XDH), and xylulokinase, to form xylulose 5-phosphate, which enters pentose phosphate pathway. This Emericella nidulans (strain FGSC A4 / ATCC 38163 / CBS 112.46 / NRRL 194 / M139) (Aspergillus nidulans) protein is Probable D-xylulose reductase A (xdhA).